A 347-amino-acid polypeptide reads, in one-letter code: Geranylgeranyl pyrophosphate synthase 7, chloroplastic (347 aa).

The transit peptide at 1-39 (MTTLNLSIFPSVKISSSASIPGFIKIQPFLLRRKLSTVL) directs the protein to the chloroplast. The isopentenyl diphosphate site is built by K95, R98, and H127. The Mg(2+) site is built by D134 and D140. Position 145 (R145) interacts with dimethylallyl diphosphate. Position 146 (R146) interacts with isopentenyl diphosphate. Residues K232, T233, Q270, K287, and K297 each contribute to the dimethylallyl diphosphate site.

It belongs to the FPP/GGPP synthase family. In terms of assembly, monomer. It depends on Mg(2+) as a cofactor.

The protein resides in the plastid. It is found in the chloroplast. It catalyses the reaction isopentenyl diphosphate + dimethylallyl diphosphate = (2E)-geranyl diphosphate + diphosphate. The catalysed reaction is isopentenyl diphosphate + (2E)-geranyl diphosphate = (2E,6E)-farnesyl diphosphate + diphosphate. The enzyme catalyses isopentenyl diphosphate + (2E,6E)-farnesyl diphosphate = (2E,6E,10E)-geranylgeranyl diphosphate + diphosphate. The protein operates within isoprenoid biosynthesis; farnesyl diphosphate biosynthesis; farnesyl diphosphate from geranyl diphosphate and isopentenyl diphosphate: step 1/1. It participates in isoprenoid biosynthesis; geranyl diphosphate biosynthesis; geranyl diphosphate from dimethylallyl diphosphate and isopentenyl diphosphate: step 1/1. Its pathway is isoprenoid biosynthesis; geranylgeranyl diphosphate biosynthesis; geranylgeranyl diphosphate from farnesyl diphosphate and isopentenyl diphosphate: step 1/1. Functionally, catalyzes the trans-addition of the three molecules of IPP onto DMAPP to form geranylgeranyl pyrophosphate. This is Geranylgeranyl pyrophosphate synthase 7, chloroplastic from Arabidopsis thaliana (Mouse-ear cress).